Reading from the N-terminus, the 377-residue chain is Pseudouridylate synthase RPUSD4, mitochondrial (377 aa).

The N-terminal 15 residues, 1 to 15 (MAAPRWSASGPWIRG), are a transit peptide targeting the mitochondrion. The stretch at 36-62 (AASTAINAQRLAEKLRAQKREQDTKKE) forms a coiled coil. The active site involves D153.

Belongs to the pseudouridine synthase RluA family. Interacts with 16S mt-rRNA, mt-tRNA(Phe) and mt-tRNA(Met). Forms a regulatory protein-RNA complex, consisting of RCC1L, NGRN, RPUSD3, RPUSD4, TRUB2, FASTKD2 and 16S mt-rRNA.

It is found in the mitochondrion matrix. The protein localises to the nucleus. The protein resides in the cytoplasm. It carries out the reaction uridine in 5S rRNA = pseudouridine in 5S rRNA. It catalyses the reaction a uridine in tRNA = a pseudouridine in tRNA. The enzyme catalyses a uridine in mRNA = a pseudouridine in mRNA. In terms of biological role, catalyzes uridine to pseudouridine isomerization (pseudouridylation) of different mitochondrial RNA substrates. Acts on position 1397 in 16S mitochondrial ribosomal RNA (16S mt-rRNA). This modification is required for the assembly of 16S mt-rRNA into a functional mitochondrial ribosome. As a component of a functional protein-RNA module, consisting of RCC1L, NGRN, RPUSD3, RPUSD4, TRUB2, FASTKD2 and 16S mt-rRNA, controls 16S mt-rRNA abundance and is required for intra-mitochondrial translation. Acts on position 39 in mitochondrial tRNA(Phe). Also catalyzes pseudouridylation of mRNAs in nucleus: acts as a regulator of pre-mRNA splicing by mediating pseudouridylation of pre-mRNAs at locations associated with alternatively spliced regions. Pseudouridylation of pre-mRNAs near splice sites directly regulates mRNA splicing and mRNA 3'-end processing. This chain is Pseudouridylate synthase RPUSD4, mitochondrial, found in Homo sapiens (Human).